Reading from the N-terminus, the 145-residue chain is Ribosomal RNA large subunit methyltransferase H (145 aa).

S-adenosyl-L-methionine contacts are provided by residues Leu62, Gly94, and 113–118; that span reads LGQLTL.

Belongs to the RNA methyltransferase RlmH family. Homodimer.

It localises to the cytoplasm. The catalysed reaction is pseudouridine(1915) in 23S rRNA + S-adenosyl-L-methionine = N(3)-methylpseudouridine(1915) in 23S rRNA + S-adenosyl-L-homocysteine + H(+). Its function is as follows. Specifically methylates the pseudouridine at position 1915 (m3Psi1915) in 23S rRNA. The protein is Ribosomal RNA large subunit methyltransferase H of Deinococcus deserti (strain DSM 17065 / CIP 109153 / LMG 22923 / VCD115).